We begin with the raw amino-acid sequence, 388 residues long: Zinc finger C2H2 protein ECU10_0150 (388 aa).

Residues 299–322 form a C2H2-type zinc finger; it reads YKCGFCGKAFESEKFIFNHFNNKH.

The sequence is that of Zinc finger C2H2 protein ECU10_0150 from Encephalitozoon cuniculi (strain GB-M1) (Microsporidian parasite).